The chain runs to 480 residues: Cysteine--tRNA ligase (480 aa).

Cysteine 29 contributes to the Zn(2+) binding site. Positions 31 to 41 (PTVYSDPHLGH) match the 'HIGH' region motif. Zn(2+) is bound by residues cysteine 220, histidine 245, and glutamate 249. The short motif at 276 to 280 (KMAKS) is the 'KMSKS' region element. Residue lysine 279 coordinates ATP.

It belongs to the class-I aminoacyl-tRNA synthetase family. In terms of assembly, monomer. Zn(2+) is required as a cofactor.

The protein localises to the cytoplasm. The catalysed reaction is tRNA(Cys) + L-cysteine + ATP = L-cysteinyl-tRNA(Cys) + AMP + diphosphate. The sequence is that of Cysteine--tRNA ligase from Thermus thermophilus (strain ATCC BAA-163 / DSM 7039 / HB27).